A 512-amino-acid polypeptide reads, in one-letter code: rRNA N(6)-adenosine-methyltransferase ZCCHC4 (512 aa).

Residues C39, H41, C63, C72, C124, C127, H139, and H142 each coordinate Zn(2+). A GRF-type zinc finger spans residues 39 to 81 (CPHGPTLLFVKVNQGKEETRKFYACSACRDRKDCNFFQWEDEK). Residues 171-174 (QYLF), R201, D223, 241-242 (NM), and D274 contribute to the S-adenosyl-L-methionine site. The regulatory loop stretch occupies residues 335–355 (QVDYDNHALYKHGKTGRKQSP). Zn(2+) contacts are provided by C378, C381, H391, C392, C395, C398, H408, C409, C412, C415, H422, C423, C426, C429, H434, and C436. The 53-residue stretch at 393-445 (VHCNSCTSKDGRKWSHCFLCKKCVKPSWIHCNTCNRCALPDHSCLGPKDGCFI) folds into the DHHC domain. The segment at 441-458 (DGCFICGALDHKRSNCPN) adopts a CCHC-type zinc-finger fold.

It belongs to the ZCCHC4 family. As to quaternary structure, interacts with components of the ASC-1 complex TRIP4, ASCC1, ASCC2 and ASCC3. Interact with AHCYL1 and AHCYL2. Interact with YTHDC2.

The protein localises to the cytoplasm. It is found in the nucleus. It localises to the nucleolus. It catalyses the reaction adenosine(4220) in 28S rRNA + S-adenosyl-L-methionine = N(6)-methyladenosine(4220) in 28S rRNA + S-adenosyl-L-homocysteine + H(+). Functionally, rRNA N6-methyltransferase that specifically methylates the adenine in position 4220 of 28S rRNA. N6-methylation of adenine(4220) in 28S rRNA is required for translation. In Mus musculus (Mouse), this protein is rRNA N(6)-adenosine-methyltransferase ZCCHC4.